A 662-amino-acid chain; its full sequence is UvrABC system protein B (662 aa).

One can recognise a Helicase ATP-binding domain in the interval 25-414 (AGLNSKKRSQ…GTVVELIIRP (390 aa)). 38–45 (GITGSGKT) contacts ATP. Positions 91–114 (YYDYYQPEAYIVRTDTFIEKDSSI) match the Beta-hairpin motif. The region spanning 430–592 (QVEDLISEIQ…IIPKTINSAI (163 aa)) is the Helicase C-terminal domain. In terms of domain architecture, UVR spans 622 to 657 (KSYMDKLKKEMFKAASNLEFEQAAKLRNQLKTLEKA).

The protein belongs to the UvrB family. In terms of assembly, forms a heterotetramer with UvrA during the search for lesions. Interacts with UvrC in an incision complex.

Its subcellular location is the cytoplasm. Its function is as follows. The UvrABC repair system catalyzes the recognition and processing of DNA lesions. A damage recognition complex composed of 2 UvrA and 2 UvrB subunits scans DNA for abnormalities. Upon binding of the UvrA(2)B(2) complex to a putative damaged site, the DNA wraps around one UvrB monomer. DNA wrap is dependent on ATP binding by UvrB and probably causes local melting of the DNA helix, facilitating insertion of UvrB beta-hairpin between the DNA strands. Then UvrB probes one DNA strand for the presence of a lesion. If a lesion is found the UvrA subunits dissociate and the UvrB-DNA preincision complex is formed. This complex is subsequently bound by UvrC and the second UvrB is released. If no lesion is found, the DNA wraps around the other UvrB subunit that will check the other stand for damage. The sequence is that of UvrABC system protein B from Rickettsia typhi (strain ATCC VR-144 / Wilmington).